A 906-amino-acid chain; its full sequence is Protein translocase subunit SecA (906 aa).

ATP is bound by residues Gln89, 107 to 111 (GEGKT), and Asp502. Zn(2+)-binding residues include Cys890, Cys892, Cys901, and His902.

Belongs to the SecA family. As to quaternary structure, monomer and homodimer. Part of the essential Sec protein translocation apparatus which comprises SecA, SecYEG and auxiliary proteins SecDF-YajC and YidC. Zn(2+) is required as a cofactor.

The protein resides in the cell inner membrane. It is found in the cytoplasm. The enzyme catalyses ATP + H2O + cellular proteinSide 1 = ADP + phosphate + cellular proteinSide 2.. Part of the Sec protein translocase complex. Interacts with the SecYEG preprotein conducting channel. Has a central role in coupling the hydrolysis of ATP to the transfer of proteins into and across the cell membrane, serving both as a receptor for the preprotein-SecB complex and as an ATP-driven molecular motor driving the stepwise translocation of polypeptide chains across the membrane. The protein is Protein translocase subunit SecA of Bartonella quintana (strain Toulouse) (Rochalimaea quintana).